Here is a 937-residue protein sequence, read N- to C-terminus: AP-2 complex subunit beta (937 aa).

N-acetylthreonine is present on Thr-2. Ser-4 bears the Phosphoserine mark. N6-acetyllysine is present on Lys-265. Tyr-737 and Tyr-928 each carry phosphotyrosine.

Belongs to the adaptor complexes large subunit family. Adapter protein complex 2 (AP-2) is a heterotetramer composed of two large adaptins (alpha-type subunit AP2A1 or AP2A2 and beta-type subunit AP2B1), a medium adaptin (mu-type subunit AP2M1) and a small adaptin (sigma-type subunit AP2S1). Interacts with EPN1. Interacts with EPS15; clathrin competes with EPS15. Interacts with SNAP91; clathrin competes with SNAP91. Interacts with CLTC; clathrin competes with EPS15, SNAP91 and PIP5K1C. Interacts with LDLRAP1. Interacts with AMPH and BIN1. Interacts with ARF6 (GDP-bound). Interacts (dephosphorylated at Tyr-737) with ARRB1; phosphorylation of AP2B1 at Tyr-737 disrupts the interaction. Interacts with SLC2A8. Interacts with SCYL1 and SCYL2. Interacts with TGFBR1 and TGFBR2. Interacts with PIP5K1C; clathrin competes with PIP5K1C. Interacts with DENND1B. Interacts with FCHO1. Interacts with RFTN1. Interacts with KIAA1107. Together with AP2A1 or AP2A2 and AP2M1, it interacts with ADAM10; this interaction facilitates ADAM10 endocytosis from the plasma membrane during long-term potentiation in hippocampal neurons. In terms of processing, the N-terminus is blocked. Phosphorylation at Tyr-737 by SRC occurs at the plasma membrane in clathrin-coated vesicles (CCVs).

The protein localises to the cell membrane. It localises to the membrane. The protein resides in the coated pit. Its function is as follows. Component of the adaptor protein complex 2 (AP-2). Adaptor protein complexes function in protein transport via transport vesicles in different membrane traffic pathways. Adaptor protein complexes are vesicle coat components and appear to be involved in cargo selection and vesicle formation. AP-2 is involved in clathrin-dependent endocytosis in which cargo proteins are incorporated into vesicles surrounded by clathrin (clathrin-coated vesicles, CCVs) which are destined for fusion with the early endosome. The clathrin lattice serves as a mechanical scaffold but is itself unable to bind directly to membrane components. Clathrin-associated adaptor protein (AP) complexes which can bind directly to both the clathrin lattice and to the lipid and protein components of membranes are considered to be the major clathrin adaptors contributing the CCV formation. AP-2 also serves as a cargo receptor to selectively sort the membrane proteins involved in receptor-mediated endocytosis. AP-2 seems to play a role in the recycling of synaptic vesicle membranes from the presynaptic surface. AP-2 recognizes Y-X-X-[FILMV] (Y-X-X-Phi) and [ED]-X-X-X-L-[LI] endocytosis signal motifs within the cytosolic tails of transmembrane cargo molecules. AP-2 may also play a role in maintaining normal post-endocytic trafficking through the ARF6-regulated, non-clathrin pathway. During long-term potentiation in hippocampal neurons, AP-2 is responsible for the endocytosis of ADAM10. The AP-2 beta subunit acts via its C-terminal appendage domain as a scaffolding platform for endocytic accessory proteins; at least some clathrin-associated sorting proteins (CLASPs) are recognized by their [DE]-X(1,2)-F-X-X-[FL]-X-X-X-R motif. The AP-2 beta subunit binds to clathrin heavy chain, promoting clathrin lattice assembly; clathrin displaces at least some CLASPs from AP2B1 which probably then can be positioned for further coat assembly. The protein is AP-2 complex subunit beta (AP2B1) of Bos taurus (Bovine).